A 445-amino-acid chain; its full sequence is Phosphoglucosamine mutase (445 aa).

Serine 102 acts as the Phosphoserine intermediate in catalysis. 4 residues coordinate Mg(2+): serine 102, aspartate 240, aspartate 242, and aspartate 244. At serine 102 the chain carries Phosphoserine.

Belongs to the phosphohexose mutase family. Mg(2+) serves as cofactor. Post-translationally, activated by phosphorylation.

The catalysed reaction is alpha-D-glucosamine 1-phosphate = D-glucosamine 6-phosphate. Its function is as follows. Catalyzes the conversion of glucosamine-6-phosphate to glucosamine-1-phosphate. In Mycobacterium marinum (strain ATCC BAA-535 / M), this protein is Phosphoglucosamine mutase.